We begin with the raw amino-acid sequence, 185 residues long: Translocon-associated protein subunit gamma (185 aa).

N-acetylmethionine is present on Met-1. Residues 1 to 27 (MAPKGSCKQQSEEDLLLQDFSRNLSAK) lie on the Lumenal side of the membrane. Ser-11 carries the post-translational modification Phosphoserine. The chain crosses the membrane as a helical span at residues 28-48 (SSALFFGNAFIVSAIPIWLYW). Residues 49–54 (RIWHMD) lie on the Cytoplasmic side of the membrane. The helical transmembrane segment at 55–76 (LIQSAVLYSVMTLVSTYLVAFA) threads the bilayer. The Lumenal portion of the chain corresponds to 77–135 (YKNVKFVLKHKVAQKREDAVSKEVTRKLSEADNRKMSRKEKDERILWKKNEVADYEATT). Ser-105 carries the phosphoserine modification. A helical transmembrane segment spans residues 136–157 (FSIFYNNTLFLVVVIVASFFIL). Residues 158 to 163 (KNFNPT) lie on the Cytoplasmic side of the membrane. Residues 164–184 (VNYILSISASSGLIALLSTGS) form a helical membrane-spanning segment.

It belongs to the TRAP-gamma family. As to quaternary structure, heterotetramer of TRAP-alpha, TRAP-beta, TRAP-delta and TRAP-gamma.

It localises to the endoplasmic reticulum membrane. Its function is as follows. TRAP proteins are part of a complex whose function is to bind calcium to the ER membrane and thereby regulate the retention of ER resident proteins. The sequence is that of Translocon-associated protein subunit gamma (SSR3) from Pongo abelii (Sumatran orangutan).